A 212-amino-acid polypeptide reads, in one-letter code: Imidazole glycerol phosphate synthase subunit HisH (212 aa).

In terms of domain architecture, Glutamine amidotransferase type-1 spans 3-212 (DVAIIDYGMG…MLANFISWAP (210 aa)). The active-site Nucleophile is the C82. Catalysis depends on residues H192 and E194.

Heterodimer of HisH and HisF.

The protein localises to the cytoplasm. The enzyme catalyses 5-[(5-phospho-1-deoxy-D-ribulos-1-ylimino)methylamino]-1-(5-phospho-beta-D-ribosyl)imidazole-4-carboxamide + L-glutamine = D-erythro-1-(imidazol-4-yl)glycerol 3-phosphate + 5-amino-1-(5-phospho-beta-D-ribosyl)imidazole-4-carboxamide + L-glutamate + H(+). It carries out the reaction L-glutamine + H2O = L-glutamate + NH4(+). It participates in amino-acid biosynthesis; L-histidine biosynthesis; L-histidine from 5-phospho-alpha-D-ribose 1-diphosphate: step 5/9. Functionally, IGPS catalyzes the conversion of PRFAR and glutamine to IGP, AICAR and glutamate. The HisH subunit catalyzes the hydrolysis of glutamine to glutamate and ammonia as part of the synthesis of IGP and AICAR. The resulting ammonia molecule is channeled to the active site of HisF. The chain is Imidazole glycerol phosphate synthase subunit HisH from Aromatoleum aromaticum (strain DSM 19018 / LMG 30748 / EbN1) (Azoarcus sp. (strain EbN1)).